A 465-amino-acid chain; its full sequence is Solute carrier family 7 member 12 (465 aa).

The Cytoplasmic segment spans residues 1–6; it reads MQLLRA. Residues 7–27 traverse the membrane as a helical segment; sequence LGVFHVSMILFSATLGTGIFV. The Extracellular segment spans residues 28–39; the sequence is TPKAVLKYSSLN. A helical membrane pass occupies residues 40 to 60; that stretch reads IPVSLSIWAGCGLLSIMSALC. The Cytoplasmic segment spans residues 61-81; the sequence is NAEIATTYPLSGASYYFLKRT. The chain crosses the membrane as a helical span at residues 82–102; sequence LGSSVAFLSLWIKLFAHFLGI. Over 103–132 the chain is Extracellular; the sequence is GAQCLLIATSVIQCFYSGCPAPELPTKCLA. Residues 133–153 traverse the membrane as a helical segment; sequence LAILWSFGIVSARGIKTVAWF. Position 154 (N154) is a topological domain, cytoplasmic. Residues 155-175 form a helical membrane-spanning segment; sequence TVSSFIKLSVLCLISLTVLLV. At 176-202 the chain is on the extracellular side; the sequence is NGKKENVSRFENALDAELPNASQIADA. Residues 203–223 traverse the membrane as a helical segment; sequence ILQVSYSYLGSSVLIVIAGEI. The Cytoplasmic segment spans residues 224 to 234; it reads KRPTETIPKTL. Residues 235 to 255 form a helical membrane-spanning segment; sequence IYGISIVTVLYLLTNISYLAV. At 256–280 the chain is on the extracellular side; sequence LTSQEIIFSDSVGVTWMNRVFPSIQ. A helical transmembrane segment spans residues 281-301; that stretch reads WISSFLISAFLLGSVSCGIVS. Residues 302–327 are Cytoplasmic-facing; that stretch reads ASRVFYSASQEGEFPSIYSMLNDHHS. Residues 328-351 form a helical membrane-spanning segment; sequence PAVADIQIVILSSVAIISSSIIYL. Residues 352–356 are Extracellular-facing; sequence VKYVS. A helical transmembrane segment spans residues 357-375; that stretch reads LGSFCINLLQMIGLLKIRY. The Cytoplasmic segment spans residues 376–386; that stretch reads QNPDIPRPYKV. Residues 387–407 form a helical membrane-spanning segment; the sequence is WLPFIFGSIALSLFLIFTPVI. At 408-409 the chain is on the extracellular side; sequence QS. Residues 410-430 form a helical membrane-spanning segment; sequence PSIEHVYQVVFLFCGFLCYWL. The Cytoplasmic segment spans residues 431-465; the sequence is QANLNGHATCFDTITCYCQLLFNISPSEDPEEQKN.

It belongs to the amino acid-polyamine-organocation (APC) superfamily. Probably forms multimers, perhaps with an unknown protein(s). Expressed in kidney and red blood cells (at protein level). Expressed in kidney along the collecting ducts in the cortex, outer and inner medulla. May be expressed in placenta, lungs, spleen and skeletal muscles.

Its subcellular location is the apical cell membrane. The protein resides in the basal cell membrane. It localises to the cytoplasm. In terms of biological role, probably mediates sodium- and chloride-independent uptake of neutral amino acids. The polypeptide is Solute carrier family 7 member 12 (Mus musculus (Mouse)).